Consider the following 766-residue polypeptide: MTVSPEQIDRIVSNQHHDPFEILGCHQIQQNGQSVWAVRAYLPNAERVSVLCPEQRQEYPMTPVHHPHFFECHIPVAELNNYQLKIYENGHERVIYDPYAFRSPKLTDFDIHLFAEGNHHRIYEKLGAHLLTVDGVEGVYFAVWAPNARNVSVIGDFNHWDGRKHQMARRGNGIWELFIPGLSVGERYKYEIKNQEGHIYEKSDPYGFYQEPRPKTASIVTDLNSYEWGDSDWLEKRRHTDPLNQPISVYEVHLGSWLHASMEDPPIGADGQPQEPVQAAELKPWARFLTYRELAAKLIPYVKELGYTHIELLPVAEHPFDGSWGYQVTGYYAPTSRYGSPHDFMYFVDQCHQNGIGVIVDWVPGHFPKDGHGLAFFDGTHLYEHADPRKGEHKEWGTLVFNYGRHEVRNFLVANALFWFDKYHIDGIRVDAVASMLYLDYGRKEGEWIPNEYGGRENLEAANFLRQVNHVIFSYFPGILSIAEESTAWPMVSWPTYMGGLGFNLKWNMGWMHDMLDYFSMDPWFRQFHHNNVTFSMWYHHSENFMLALSHDEVVHGKSHIIGKMPGDRWQKFANLRCLFAYMFTHPGKKTMFMGMEFAQWSEWNVWSDLEWHLLQYEPHQQIKRFFGDLNHLYRSQPALYSQDFKQEGFEWIDCSDNRHSVVSFIRWDKDYQDFVVVVCNFTPQPHSHYRIGVPEHGFYRELFNSDAREYGGSNMGNLGGKWADEWPYHQRRYSLDLCLPPLAVLILKLDREKTVAERARYNLQS.

D431 acts as the Nucleophile in catalysis. The active-site Proton donor is E484.

It belongs to the glycosyl hydrolase 13 family. GlgB subfamily. As to quaternary structure, monomer.

It catalyses the reaction Transfers a segment of a (1-&gt;4)-alpha-D-glucan chain to a primary hydroxy group in a similar glucan chain.. Its pathway is glycan biosynthesis; glycogen biosynthesis. In terms of biological role, catalyzes the formation of the alpha-1,6-glucosidic linkages in glycogen by scission of a 1,4-alpha-linked oligosaccharide from growing alpha-1,4-glucan chains and the subsequent attachment of the oligosaccharide to the alpha-1,6 position. This chain is 1,4-alpha-glucan branching enzyme GlgB, found in Thermosynechococcus vestitus (strain NIES-2133 / IAM M-273 / BP-1).